We begin with the raw amino-acid sequence, 330 residues long: Aspartate--ammonia ligase (330 aa).

Belongs to the class-II aminoacyl-tRNA synthetase family. AsnA subfamily.

The protein localises to the cytoplasm. It catalyses the reaction L-aspartate + NH4(+) + ATP = L-asparagine + AMP + diphosphate + H(+). It participates in amino-acid biosynthesis; L-asparagine biosynthesis; L-asparagine from L-aspartate (ammonia route): step 1/1. This chain is Aspartate--ammonia ligase, found in Glaesserella parasuis serovar 5 (strain SH0165) (Haemophilus parasuis).